A 250-amino-acid chain; its full sequence is Lectin 1 (250 aa).

Residue N119 is glycosylated (N-linked (GlcNAc...) asparagine; partial). Residues E128 and D130 each coordinate Mn(2+). Positions 130, 132, 138, and 141 each coordinate Ca(2+). Mn(2+)-binding residues include D141 and H146.

This sequence belongs to the leguminous lectin family.

Its function is as follows. Di-N-acetylchitobiose specific lectin. The polypeptide is Lectin 1 (Laburnum alpinum (Scotch laburnum)).